The sequence spans 335 residues: Phosphate acyltransferase (335 aa).

Belongs to the PlsX family. In terms of assembly, homodimer. Probably interacts with PlsY.

The protein resides in the cytoplasm. The catalysed reaction is a fatty acyl-[ACP] + phosphate = an acyl phosphate + holo-[ACP]. It participates in lipid metabolism; phospholipid metabolism. Catalyzes the reversible formation of acyl-phosphate (acyl-PO(4)) from acyl-[acyl-carrier-protein] (acyl-ACP). This enzyme utilizes acyl-ACP as fatty acyl donor, but not acyl-CoA. This Heliobacterium modesticaldum (strain ATCC 51547 / Ice1) protein is Phosphate acyltransferase.